A 327-amino-acid polypeptide reads, in one-letter code: Elongation factor P--(R)-beta-lysine ligase (327 aa).

80 to 82 (SPE) contributes to the substrate binding site. Residues 104 to 106 (RNE) and N113 contribute to the ATP site. Y122 serves as a coordination point for substrate. 246–247 (EL) contributes to the ATP binding site. A substrate-binding site is contributed by E253. G302 contributes to the ATP binding site.

It belongs to the class-II aminoacyl-tRNA synthetase family. EpmA subfamily. Homodimer.

The catalysed reaction is D-beta-lysine + L-lysyl-[protein] + ATP = N(6)-((3R)-3,6-diaminohexanoyl)-L-lysyl-[protein] + AMP + diphosphate + H(+). Functionally, with EpmB is involved in the beta-lysylation step of the post-translational modification of translation elongation factor P (EF-P). Catalyzes the ATP-dependent activation of (R)-beta-lysine produced by EpmB, forming a lysyl-adenylate, from which the beta-lysyl moiety is then transferred to the epsilon-amino group of a conserved specific lysine residue in EF-P. The protein is Elongation factor P--(R)-beta-lysine ligase of Haemophilus ducreyi (strain 35000HP / ATCC 700724).